The chain runs to 328 residues: UPF0421 protein SSP0904 (328 aa).

4 helical membrane-spanning segments follow: residues Leu-26–Ile-46, Leu-61–Gln-81, Phe-84–Val-104, and Leu-132–Pro-152.

This sequence belongs to the UPF0421 family.

It localises to the cell membrane. This Staphylococcus saprophyticus subsp. saprophyticus (strain ATCC 15305 / DSM 20229 / NCIMB 8711 / NCTC 7292 / S-41) protein is UPF0421 protein SSP0904.